Here is a 194-residue protein sequence, read N- to C-terminus: MAVTTSMSFNLMASFRGMSLSSSSSSSFFKGEFGPSSLRLPNKSPLSVSPFPLTIESAHKKGAGSTKNGRDSKGQRLGVKIYGDQVAKPGAIIIRQRGTKFHPGKNVGIGKDHTIFALIDGLVKFEKYGPDKKKVSVYPREIQPENPNSYRARKRENFRLQREKKKARREGYSFQPQLILASAATDNADESAVC.

A chloroplast-targeting transit peptide spans 1–57 (MAVTTSMSFNLMASFRGMSLSSSSSSSFFKGEFGPSSLRLPNKSPLSVSPFPLTIES). Positions 57–76 (SAHKKGAGSTKNGRDSKGQR) are disordered.

In terms of assembly, component of the chloroplast large ribosomal subunit (LSU). Mature 70S chloroplast ribosomes of higher plants consist of a small (30S) and a large (50S) subunit. The 30S small subunit contains 1 molecule of ribosomal RNA (16S rRNA) and 24 different proteins. The 50S large subunit contains 3 rRNA molecules (23S, 5S and 4.5S rRNA) and 33 different proteins.

The protein resides in the plastid. The protein localises to the chloroplast. Component of the chloroplast ribosome (chloro-ribosome), a dedicated translation machinery responsible for the synthesis of chloroplast genome-encoded proteins, including proteins of the transcription and translation machinery and components of the photosynthetic apparatus. The chain is Large ribosomal subunit protein bL27c (RPL27) from Spinacia oleracea (Spinach).